Consider the following 690-residue polypeptide: Copper-exporting P-type ATPase B (690 aa).

Residues 1-64 (MHEHDSHGEA…MEDFKKRFYV (64 aa)) are Cytoplasmic-facing. Residues 23–46 (QHHEHHGHEEEHSAHHEKMKHSAD) are disordered. Over residues 28–46 (HGHEEEHSAHHEKMKHSAD) the composition is skewed to basic and acidic residues. A helical membrane pass occupies residues 65–85 (STLLTIPILILSPAIQTFLGF). At 86–91 (RVEFAG) the chain is on the extracellular side. The helical transmembrane segment at 92-112 (SLYILFLLSSAVYFYGGYPFL) threads the bilayer. The Cytoplasmic portion of the chain corresponds to 113–127 (KGIFDELRRRQPGMM). The helical transmembrane segment at 128 to 148 (TLIAVAISVAYFYSSAVVFGL) threads the bilayer. Over 149–151 (KGK) the chain is Extracellular. A helical transmembrane segment spans residues 152-172 (FFFWELATLIDIMLLGHYIEM). Over 173–303 (RSVLGASRAL…KSRTQDLANR (131 aa)) the chain is Cytoplasmic. A helical transmembrane segment spans residues 304 to 324 (AALLLTVIALTVGSVTLAIWL). The Extracellular segment spans residues 325 to 336 (AYIADFAFAIER). A helical membrane pass occupies residues 337-357 (AVTVMVITCPHALGLAIPLVV). At 358–640 (AVSTSLAAKS…RKTYSKMKQN (283 aa)) the chain is on the cytoplasmic side. The active-site 4-aspartylphosphate intermediate is the D389. Residues 390 to 391 (KT), 537 to 538 (TG), and K565 contribute to the phosphate site. Residues D583 and D587 each contribute to the Mg(2+) site. A helical transmembrane segment spans residues 641–661 (LLWATGYNAFAIPLAAGVLYS). Residues 662 to 663 (AG) lie on the Extracellular side of the membrane. A helical membrane pass occupies residues 664 to 684 (ILLSPAVGAILMSLSTVIVAI). At 685–690 (NARLLR) the chain is on the cytoplasmic side.

This sequence belongs to the cation transport ATPase (P-type) (TC 3.A.3) family. Type IB subfamily.

It is found in the cell membrane. It catalyses the reaction Cu(2+)(in) + ATP + H2O = Cu(2+)(out) + ADP + phosphate + H(+). Activated by Cu(2+) and to a lesser extent by Ag(+) and Cu(+). In terms of biological role, involved in copper export. The protein is Copper-exporting P-type ATPase B (copB) of Archaeoglobus fulgidus (strain ATCC 49558 / DSM 4304 / JCM 9628 / NBRC 100126 / VC-16).